We begin with the raw amino-acid sequence, 506 residues long: Galactose/methyl galactoside import ATP-binding protein MglA (506 aa).

ABC transporter domains lie at 14 to 249 (LEMS…VGRS) and 264 to 506 (VILE…SLHL). Residue 46–53 (GENGAGKS) participates in ATP binding.

The protein belongs to the ABC transporter superfamily. Galactose/methyl galactoside importer (TC 3.A.1.2.3) family. The complex is composed of one ATP-binding protein (MglA), two transmembrane proteins (MglC) and a solute-binding protein (MglB).

It is found in the cell inner membrane. The catalysed reaction is D-galactose(out) + ATP + H2O = D-galactose(in) + ADP + phosphate + H(+). The enzyme catalyses methyl beta-D-galactoside(out) + ATP + H2O = methyl beta-D-galactoside(in) + ADP + phosphate + H(+). Functionally, part of the ABC transporter complex MglABC involved in galactose/methyl galactoside import. Responsible for energy coupling to the transport system. The sequence is that of Galactose/methyl galactoside import ATP-binding protein MglA from Shigella flexneri serotype 5b (strain 8401).